Consider the following 267-residue polypeptide: Exosome complex component Rrp42 (267 aa).

Belongs to the RNase PH family. Rrp42 subfamily. In terms of assembly, component of the archaeal exosome complex. Forms a hexameric ring-like arrangement composed of 3 Rrp41-Rrp42 heterodimers. The hexameric ring associates with a trimer of Rrp4 and/or Csl4 subunits.

The protein localises to the cytoplasm. Functionally, non-catalytic component of the exosome, which is a complex involved in RNA degradation. Contributes to the structuring of the Rrp41 active site. The sequence is that of Exosome complex component Rrp42 from Methanopyrus kandleri (strain AV19 / DSM 6324 / JCM 9639 / NBRC 100938).